The following is a 220-amino-acid chain: MKFFIDTANLDQIREANDMGVLDGVTTNPSLMAKEGISGKDNCMRHYLAICEIVDGDVSAEVIATDYEGMIREGEELAALHPQIVVKVPCTAEGIKAIKYFSDKGIRTNCTLIFTVGQALLAAKAGASYVSPFVGRLDDIASDGIKLVENIVAMFGFYRYETEVLAASIRHTQHIIQCLEAGADVATCPLNAIKGLLKHPLTDSGLKAFLEDHRRVNEGK.

Residue Lys-87 is the Schiff-base intermediate with substrate of the active site.

The protein belongs to the transaldolase family. Type 3B subfamily.

The protein localises to the cytoplasm. It carries out the reaction D-sedoheptulose 7-phosphate + D-glyceraldehyde 3-phosphate = D-erythrose 4-phosphate + beta-D-fructose 6-phosphate. Its pathway is carbohydrate degradation; pentose phosphate pathway; D-glyceraldehyde 3-phosphate and beta-D-fructose 6-phosphate from D-ribose 5-phosphate and D-xylulose 5-phosphate (non-oxidative stage): step 2/3. Functionally, transaldolase is important for the balance of metabolites in the pentose-phosphate pathway. The protein is Probable transaldolase of Porphyromonas gingivalis (strain ATCC 33277 / DSM 20709 / CIP 103683 / JCM 12257 / NCTC 11834 / 2561).